The sequence spans 147 residues: Lysozyme C (147 aa).

The first 18 residues, 1 to 18 (MKVLLLLGFIFCSMAAHG), serve as a signal peptide directing secretion. The region spanning 19–147 (KRMERCEFAR…LSKYLEGCHL (129 aa)) is the C-type lysozyme domain. Intrachain disulfides connect C24-C145, C48-C133, C83-C99, and C95-C113. Catalysis depends on residues E53 and D71.

Belongs to the glycosyl hydrolase 22 family. In terms of assembly, monomer.

The protein resides in the secreted. It carries out the reaction Hydrolysis of (1-&gt;4)-beta-linkages between N-acetylmuramic acid and N-acetyl-D-glucosamine residues in a peptidoglycan and between N-acetyl-D-glucosamine residues in chitodextrins.. Its function is as follows. Lysozymes have primarily a bacteriolytic function; those in tissues and body fluids are associated with the monocyte-macrophage system and enhance the activity of immunoagents. This Trichosurus vulpecula (Brush-tailed possum) protein is Lysozyme C (LYZ).